The sequence spans 615 residues: DNA mismatch repair protein MutL (615 aa).

The segment at 362–397 is disordered; sequence HFAEPAVREPVAPRYSPAPASGGRPAASWPNAQPGY. A compositionally biased stretch (low complexity) spans 378–391; sequence PAPASGGRPAASWP.

The protein belongs to the DNA mismatch repair MutL/HexB family.

Functionally, this protein is involved in the repair of mismatches in DNA. It is required for dam-dependent methyl-directed DNA mismatch repair. May act as a 'molecular matchmaker', a protein that promotes the formation of a stable complex between two or more DNA-binding proteins in an ATP-dependent manner without itself being part of a final effector complex. The polypeptide is DNA mismatch repair protein MutL (Escherichia fergusonii (strain ATCC 35469 / DSM 13698 / CCUG 18766 / IAM 14443 / JCM 21226 / LMG 7866 / NBRC 102419 / NCTC 12128 / CDC 0568-73)).